The sequence spans 1125 residues: Telomerase reverse transcriptase (1125 aa).

Residues 1–239 (MPRAPRCPAV…TKRLLSLTST (239 aa)) are RNA-interacting domain 1. The GQ motif stretch occupies residues 58-205 (VPWGSQPPPA…RPVGGNFTNL (148 aa)). Residues 137–141 (WMLLL) form a required for regulating specificity for telomeric DNA and for processivity for primer elongation region. The span at 206 to 216 (GSAHQIKNSGH) shows a compositional bias: polar residues. Positions 206 to 304 (GSAHQIKNSG…ASDPSLSGSV (99 aa)) are disordered. The segment at 240–328 (NVPSAKKARF…PPQDAEKLRP (89 aa)) is linker. Positions 247 to 259 (ARFEPALRVDKGP) are enriched in basic and acidic residues. The segment covering 273–287 (APSPAASPKVPPAAK) has biased composition (low complexity). Positions 306 to 528 (CKHKPSSSSL…VPAAEHRLRE (223 aa)) are required for oligomerization. The interval 329–540 (FTETRHFLYS…LAMFLFWLMD (212 aa)) is RNA-interacting domain 2. A TFLY; involved in RNA binding motif is present at residues 332–337 (TRHFLY). The segment at 381–511 (FCRTRRLPRR…VKVEDCHWLR (131 aa)) is QFP motif. Residues 402–422 (LMNHAKCQYVRFLRSHCRFRT) are CP motif. Ser447 is modified (phosphoserine; by DYRK2). The Reverse transcriptase domain occupies 595–928 (EVKHHQDTWL…CLFPWCGLLL (334 aa)). Tyr697 is subject to Phosphotyrosine; by SRC-type Tyr-kinases. Asp702, Asp861, and Asp862 together coordinate Mg(2+). The interval 907–921 (LGGAAPHQLPAHCLF) is required for oligomerization. The interval 923–927 (WCGLL) is primer grip sequence. Residues 929–1125 (DTRTLEVFCD…LSTDFQTILD (197 aa)) are CTE.

It belongs to the reverse transcriptase family. Telomerase subfamily. As to quaternary structure, catalytic component of the telomerase holoenzyme complex composed of one molecule of TERT, one molecule of WRAP53/TCAB1, two molecules of H/ACA ribonucleoprotein complex subunits DKC1, NOP10, NHP2 and GAR1, and a telomerase RNA template component (TERC). The telomerase holoenzyme complex is associated with TEP1, SMG6/EST1A and POT1. The molecular chaperone HSP90/P23 complex is required for correct assembly and stabilization of the active telomerase. Interacts directly with HSP90A and PTGES3. Interacts with HSPA1A; the interaction occurs in the absence of TERC and dissociates once the complex has formed. Interacts with RAN; the interaction promotes nuclear export of TERT. Interacts with XPO1. Interacts with PTPN11; the interaction retains TERT in the nucleus. Interacts with NCL (via RRM1 and C-terminal RRM4/Arg/Gly-rich domains); the interaction is important for nucleolar localization of TERT. Interacts with SMARCA4 (via the bromodomain); the interaction regulates Wnt-mediated signaling. Interacts with MCRS1 (isoform MCRS2); the interaction inhibits in vitro telomerase activity. Interacts with PIF1; the interaction has no effect on the elongation activity of TERT. Interacts with PML; the interaction recruits TERT to PML bodies and inhibits telomerase activity. Interacts with GNL3L. Interacts with isoform 1 and isoform 2 of NVL. Interacts with DHX36. Interacts with ATF7. In terms of processing, phosphorylation at Tyr-697 under oxidative stress leads to translocation of TERT to the cytoplasm and reduces its antiapoptotic activity. Dephosphorylated by SHP2/PTPN11 leading to nuclear retention. Phosphorylation at the G2/M phase at Ser-447 by DYRK2 promotes ubiquitination by the EDVP complex and degradation. Post-translationally, ubiquitinated by the EDVP complex, a E3 ligase complex following phosphorylation at Ser-447 by DYRK2. Ubiquitinated leads to proteasomal degradation. As to expression, isoform 1 and isoform 2 expressed in thymus, liver, spleen, lung, kidney and testis. High level of inactive isoform 3 in adult hippocampus, low level in heart, cortex and cerebellum.

The protein localises to the nucleus. It is found in the nucleolus. Its subcellular location is the nucleoplasm. It localises to the chromosome. The protein resides in the telomere. The protein localises to the cytoplasm. It is found in the PML body. The enzyme catalyses DNA(n) + a 2'-deoxyribonucleoside 5'-triphosphate = DNA(n+1) + diphosphate. Its function is as follows. Telomerase is a ribonucleoprotein enzyme essential for the replication of chromosome termini in most eukaryotes. Active in progenitor and cancer cells. Inactive, or very low activity, in normal somatic cells. Catalytic component of the teleromerase holoenzyme complex whose main activity is the elongation of telomeres by acting as a reverse transcriptase that adds simple sequence repeats to chromosome ends by copying a template sequence within the RNA component of the enzyme. Catalyzes the RNA-dependent extension of 3'-chromosomal termini with the 6-nucleotide telomeric repeat unit, 5'-TTAGGG-3'. The catalytic cycle involves primer binding, primer extension and release of product once the template boundary has been reached or nascent product translocation followed by further extension. More active on substrates containing 2 or 3 telomeric repeats. Telomerase activity is regulated by a number of factors including telomerase complex-associated proteins, chaperones and polypeptide modifiers. Modulates Wnt signaling. Plays important roles in aging and antiapoptosis. The chain is Telomerase reverse transcriptase from Rattus norvegicus (Rat).